The chain runs to 414 residues: Multifunctional CCA protein (414 aa).

Positions 8 and 11 each coordinate ATP. CTP-binding residues include G8 and R11. Mg(2+) contacts are provided by D21 and D23. ATP is bound by residues R91, R137, and R140. 3 residues coordinate CTP: R91, R137, and R140. Residues 228–329 (TGIHTLMVLE…VKLFDKGDFW (102 aa)) enclose the HD domain.

It belongs to the tRNA nucleotidyltransferase/poly(A) polymerase family. Bacterial CCA-adding enzyme type 1 subfamily. In terms of assembly, monomer. Can also form homodimers and oligomers. Mg(2+) is required as a cofactor. Ni(2+) serves as cofactor.

The catalysed reaction is a tRNA precursor + 2 CTP + ATP = a tRNA with a 3' CCA end + 3 diphosphate. It catalyses the reaction a tRNA with a 3' CCA end + 2 CTP + ATP = a tRNA with a 3' CCACCA end + 3 diphosphate. In terms of biological role, catalyzes the addition and repair of the essential 3'-terminal CCA sequence in tRNAs without using a nucleic acid template. Adds these three nucleotides in the order of C, C, and A to the tRNA nucleotide-73, using CTP and ATP as substrates and producing inorganic pyrophosphate. tRNA 3'-terminal CCA addition is required both for tRNA processing and repair. Also involved in tRNA surveillance by mediating tandem CCA addition to generate a CCACCA at the 3' terminus of unstable tRNAs. While stable tRNAs receive only 3'-terminal CCA, unstable tRNAs are marked with CCACCA and rapidly degraded. The polypeptide is Multifunctional CCA protein (Shewanella frigidimarina (strain NCIMB 400)).